The following is a 685-amino-acid chain: Polyphosphate kinase (685 aa).

Position 45 (Asn45) interacts with ATP. The Mg(2+) site is built by Arg375 and Arg405. The Phosphohistidine intermediate role is filled by His435. ATP-binding residues include Tyr468, Arg564, and His592.

Belongs to the polyphosphate kinase 1 (PPK1) family. Requires Mg(2+) as cofactor. An intermediate of this reaction is the autophosphorylated ppk in which a phosphate is covalently linked to a histidine residue through a N-P bond.

It catalyses the reaction [phosphate](n) + ATP = [phosphate](n+1) + ADP. Functionally, catalyzes the reversible transfer of the terminal phosphate of ATP to form a long-chain polyphosphate (polyP). This chain is Polyphosphate kinase, found in Neisseria gonorrhoeae (strain ATCC 700825 / FA 1090).